The following is a 166-amino-acid chain: Large ribosomal subunit protein uL10 (166 aa).

It belongs to the universal ribosomal protein uL10 family. Part of the ribosomal stalk of the 50S ribosomal subunit. The N-terminus interacts with L11 and the large rRNA to form the base of the stalk. The C-terminus forms an elongated spine to which L12 dimers bind in a sequential fashion forming a multimeric L10(L12)X complex.

Functionally, forms part of the ribosomal stalk, playing a central role in the interaction of the ribosome with GTP-bound translation factors. The protein is Large ribosomal subunit protein uL10 of Oceanobacillus iheyensis (strain DSM 14371 / CIP 107618 / JCM 11309 / KCTC 3954 / HTE831).